Reading from the N-terminus, the 321-residue chain is Ribosomal RNA small subunit methyltransferase H (321 aa).

S-adenosyl-L-methionine is bound by residues 29–31, aspartate 48, tyrosine 76, aspartate 97, and glutamine 104; that span reads GGH. The disordered stretch occupies residues 277-321; it reads LTRGAEPASETEKAENPRAASVRLRAVERTAPNPDHTRKPTGGAS.

This sequence belongs to the methyltransferase superfamily. RsmH family.

The protein localises to the cytoplasm. The enzyme catalyses cytidine(1402) in 16S rRNA + S-adenosyl-L-methionine = N(4)-methylcytidine(1402) in 16S rRNA + S-adenosyl-L-homocysteine + H(+). Its function is as follows. Specifically methylates the N4 position of cytidine in position 1402 (C1402) of 16S rRNA. The sequence is that of Ribosomal RNA small subunit methyltransferase H from Frankia casuarinae (strain DSM 45818 / CECT 9043 / HFP020203 / CcI3).